A 216-amino-acid chain; its full sequence is Small ribosomal subunit protein eS6 (216 aa).

It belongs to the eukaryotic ribosomal protein eS6 family.

This is Small ribosomal subunit protein eS6 from Staphylothermus marinus (strain ATCC 43588 / DSM 3639 / JCM 9404 / F1).